A 540-amino-acid chain; its full sequence is Putative cysteine ligase BshC (540 aa).

Residues 425–453 (IEKVEGMIEQQRRLNKDLLDEVAGNQNNI) are a coiled coil.

Belongs to the BshC family.

Involved in bacillithiol (BSH) biosynthesis. May catalyze the last step of the pathway, the addition of cysteine to glucosamine malate (GlcN-Mal) to generate BSH. The protein is Putative cysteine ligase BshC of Staphylococcus aureus (strain NCTC 8325 / PS 47).